Reading from the N-terminus, the 231-residue chain is Small ribosomal subunit protein uS3 (231 aa).

The KH type-2 domain maps to 39–107 (IRELLHKELK…DVVLNIVEIR (69 aa)).

Belongs to the universal ribosomal protein uS3 family. Part of the 30S ribosomal subunit. Forms a tight complex with proteins S10 and S14.

Its function is as follows. Binds the lower part of the 30S subunit head. Binds mRNA in the 70S ribosome, positioning it for translation. The chain is Small ribosomal subunit protein uS3 from Nitrobacter winogradskyi (strain ATCC 25391 / DSM 10237 / CIP 104748 / NCIMB 11846 / Nb-255).